The following is a 601-amino-acid chain: 1-deoxy-D-xylulose-5-phosphate synthase (601 aa).

Thiamine diphosphate contacts are provided by residues H63 and 104-106 (GHS). Mg(2+) is bound at residue D135. Residues 136–137 (GS), N164, Y272, and E353 contribute to the thiamine diphosphate site. Position 164 (N164) interacts with Mg(2+).

This sequence belongs to the transketolase family. DXPS subfamily. As to quaternary structure, homodimer. The cofactor is Mg(2+). Thiamine diphosphate serves as cofactor.

It carries out the reaction D-glyceraldehyde 3-phosphate + pyruvate + H(+) = 1-deoxy-D-xylulose 5-phosphate + CO2. It functions in the pathway metabolic intermediate biosynthesis; 1-deoxy-D-xylulose 5-phosphate biosynthesis; 1-deoxy-D-xylulose 5-phosphate from D-glyceraldehyde 3-phosphate and pyruvate: step 1/1. Catalyzes the acyloin condensation reaction between C atoms 2 and 3 of pyruvate and glyceraldehyde 3-phosphate to yield 1-deoxy-D-xylulose-5-phosphate (DXP). The polypeptide is 1-deoxy-D-xylulose-5-phosphate synthase (Aliarcobacter butzleri (strain RM4018) (Arcobacter butzleri)).